Reading from the N-terminus, the 297-residue chain is Cytosolic Fe-S cluster assembly factor CFD1 (297 aa).

15-22 (GKGGVGKS) contacts ATP. The [4Fe-4S] cluster site is built by cysteine 216 and cysteine 219.

Belongs to the Mrp/NBP35 ATP-binding proteins family. NUBP2/CFD1 subfamily. As to quaternary structure, heterotetramer of 2 NBP35 and 2 CFD1 chains. It depends on [4Fe-4S] cluster as a cofactor.

It localises to the cytoplasm. In terms of biological role, component of the cytosolic iron-sulfur (Fe/S) protein assembly (CIA) machinery. Required for maturation of extramitochondrial Fe-S proteins. The NBP35-CFD1 heterotetramer forms a Fe-S scaffold complex, mediating the de novo assembly of an Fe-S cluster and its transfer to target apoproteins. The sequence is that of Cytosolic Fe-S cluster assembly factor CFD1 from Phaeosphaeria nodorum (strain SN15 / ATCC MYA-4574 / FGSC 10173) (Glume blotch fungus).